The following is a 511-amino-acid chain: 2-isopropylmalate synthase (511 aa).

Residues 5-267 form the Pyruvate carboxyltransferase domain; that stretch reads LIIFDTTLRD…DTNIDTMHIL (263 aa). Positions 14, 202, 204, and 238 each coordinate Mn(2+). A regulatory domain region spans residues 393 to 511; that stretch reads KLVSLKVCTE…TVTNKAHPQI (119 aa).

The protein belongs to the alpha-IPM synthase/homocitrate synthase family. LeuA type 1 subfamily. Homodimer. Mn(2+) serves as cofactor.

The protein resides in the cytoplasm. It carries out the reaction 3-methyl-2-oxobutanoate + acetyl-CoA + H2O = (2S)-2-isopropylmalate + CoA + H(+). Its pathway is amino-acid biosynthesis; L-leucine biosynthesis; L-leucine from 3-methyl-2-oxobutanoate: step 1/4. In terms of biological role, catalyzes the condensation of the acetyl group of acetyl-CoA with 3-methyl-2-oxobutanoate (2-ketoisovalerate) to form 3-carboxy-3-hydroxy-4-methylpentanoate (2-isopropylmalate). This is 2-isopropylmalate synthase from Vesicomyosocius okutanii subsp. Calyptogena okutanii (strain HA).